The chain runs to 286 residues: MVAKILDGKQIAKDYRQGLQDQVEALKEKGFTPKLSVILVGNDGASQSYVRSKKKAAEKIGMISEIVHLEETATEEEVLNELNRLNNDDSVSGILVQVPLPKQVSEQKILEAINPEKDVDGFHPINIGKLYIDEQTFVPCTPLGIMEILKHADIDLEAKNAVVIGRSHIVGQPVSKLLLQKNASVTILHSRSKDMASYLKDADVIVSAVGKPSLVTKDVVKEGAVIIDVGNTPDENGKLKGDVDYDAVKEIAGAITPVPGGVGPLTITMVLNNTLLAEKMRRGIDS.

Residues 165 to 167 and Ser-190 each bind NADP(+); that span reads GRS.

It belongs to the tetrahydrofolate dehydrogenase/cyclohydrolase family. In terms of assembly, homodimer.

It catalyses the reaction (6R)-5,10-methylene-5,6,7,8-tetrahydrofolate + NADP(+) = (6R)-5,10-methenyltetrahydrofolate + NADPH. It carries out the reaction (6R)-5,10-methenyltetrahydrofolate + H2O = (6R)-10-formyltetrahydrofolate + H(+). It participates in one-carbon metabolism; tetrahydrofolate interconversion. Its function is as follows. Catalyzes the oxidation of 5,10-methylenetetrahydrofolate to 5,10-methenyltetrahydrofolate and then the hydrolysis of 5,10-methenyltetrahydrofolate to 10-formyltetrahydrofolate. This Staphylococcus aureus (strain JH9) protein is Bifunctional protein FolD.